Consider the following 325-residue polypeptide: Mitochondrial thiamine pyrophosphate carrier 1 (325 aa).

Solcar repeat units lie at residues 12–111 (GSRL…TTLL), 122–209 (PPSA…LRPH), and 216–312 (PFSS…ALKF). 6 helical membrane-spanning segments follow: residues 17 to 35 (VTAA…IAPL), 92 to 108 (LLYV…YRTT), 127 to 143 (SFVA…AATY), 184 to 200 (VWDR…SFFF), 223 to 239 (VART…TFPL), and 287 to 304 (GLTV…VTMW).

Belongs to the mitochondrial carrier (TC 2.A.29) family.

The protein resides in the mitochondrion inner membrane. Mitochondrial transporter that mediates uptake of thiamine pyrophosphate (ThPP) into mitochondria. This Chaetomium globosum (strain ATCC 6205 / CBS 148.51 / DSM 1962 / NBRC 6347 / NRRL 1970) (Soil fungus) protein is Mitochondrial thiamine pyrophosphate carrier 1 (TPC1).